The primary structure comprises 471 residues: Serine/threonine-protein kinase sid1 (471 aa).

The Protein kinase domain occupies 9-260; sequence YTLLRKLGSG…AKELLQHPFI (252 aa). Residues 15-23 and K38 contribute to the ATP site; that span reads LGSGSFGVV. D129 acts as the Proton acceptor in catalysis.

It belongs to the protein kinase superfamily. STE Ser/Thr protein kinase family. STE20 subfamily. As to quaternary structure, interacts with cdc14.

It localises to the cytoplasm. The protein resides in the cytoskeleton. The protein localises to the microtubule organizing center. Its subcellular location is the spindle pole body. It catalyses the reaction L-seryl-[protein] + ATP = O-phospho-L-seryl-[protein] + ADP + H(+). The catalysed reaction is L-threonyl-[protein] + ATP = O-phospho-L-threonyl-[protein] + ADP + H(+). Its function is as follows. Has a role in the septation initiation network (SIN) required for cytokinesis. In Schizosaccharomyces pombe (strain 972 / ATCC 24843) (Fission yeast), this protein is Serine/threonine-protein kinase sid1 (sid1).